The following is a 1000-amino-acid chain: Receptor-type tyrosine-protein kinase FLT3 (1000 aa).

The N-terminal stretch at methionine 1–threonine 27 is a signal peptide. At asparagine 28–serine 544 the chain is on the extracellular side. Intrachain disulfides connect cysteine 36–cysteine 66 and cysteine 104–cysteine 115. An N-linked (GlcNAc...) asparagine glycan is attached at asparagine 44. The disordered stretch occupies residues glycine 45–threonine 67. Asparagine 133 and asparagine 152 each carry an N-linked (GlcNAc...) asparagine glycan. 2 disulfide bridges follow: cysteine 200/cysteine 207 and cysteine 273/cysteine 331. The 91-residue stretch at proline 254–threonine 344 folds into the Ig-like C2-type domain. Asparagine 307, asparagine 324, and asparagine 352 each carry an N-linked (GlcNAc...) asparagine glycan. 2 disulfide bridges follow: cysteine 369/cysteine 408 and cysteine 382/cysteine 393. Asparagine 445, asparagine 474, asparagine 503, and asparagine 542 each carry an N-linked (GlcNAc...) asparagine glycan. A helical membrane pass occupies residues phenylalanine 545–cysteine 564. Topologically, residues histidine 565 to glutamine 992 are cytoplasmic. Tyrosine 573 carries the post-translational modification Phosphotyrosine. At serine 575 the chain carries Phosphoserine. Phosphotyrosine; by autocatalysis is present on residues tyrosine 590 and tyrosine 592. The important for normal regulation of the kinase activity and for maintaining the kinase in an inactive state in the absence of ligand binding stretch occupies residues tyrosine 592–tyrosine 598. A Phosphotyrosine modification is found at tyrosine 600. Residues leucine 611–leucine 946 form the Protein kinase domain. ATP contacts are provided by residues leucine 617–valine 625 and lysine 645. Residue tyrosine 727 is modified to Phosphotyrosine; by autocatalysis. Residue serine 760 is modified to Phosphoserine. 2 positions are modified to phosphotyrosine: tyrosine 769 and tyrosine 796. Catalysis depends on aspartate 814, which acts as the Proton acceptor. Residue tyrosine 845 is modified to Phosphotyrosine; by autocatalysis. 2 positions are modified to phosphotyrosine: tyrosine 958 and tyrosine 972. The interval histidine 968–serine 1000 is disordered. Serine 1000 carries the phosphoserine modification.

This sequence belongs to the protein kinase superfamily. Tyr protein kinase family. CSF-1/PDGF receptor subfamily. Monomer in the absence of bound FLT3LG. Homodimer in the presence of bound FLT3LG. Interacts with FIZ1 following ligand activation. Interacts with FES, FER, LYN, FGR, HCK, SRC and GRB2. Interacts with PTPRJ/DEP-1 and PTPN11/SHP2. Interacts with RNF115 and RNF126. In terms of processing, N-glycosylated, contains complex N-glycans with sialic acid. Autophosphorylated on several tyrosine residues in response to FLT3LG binding. FLT3LG binding also increases phosphorylation of mutant kinases that are constitutively activated. Dephosphorylated by PTPRJ/DEP-1, PTPN1, PTPN6/SHP-1, and to a lesser degree by PTPN12. Dephosphorylation is important for export from the endoplasmic reticulum and location at the cell membrane. Post-translationally, rapidly ubiquitinated by UBE2L6 and the E3 ubiquitin-protein ligase SIAH1 after autophosphorylation, leading to its proteasomal degradation. Hematopoietic stem and progenitor cell-enriched populations. Found in brain, placenta and testis.

It localises to the membrane. The protein localises to the endoplasmic reticulum lumen. The catalysed reaction is L-tyrosyl-[protein] + ATP = O-phospho-L-tyrosyl-[protein] + ADP + H(+). Its activity is regulated as follows. Present in an inactive conformation in the absence of bound ligand. FLT3LG binding leads to dimerization and activation by autophosphorylation. Its function is as follows. Tyrosine-protein kinase that acts as a cell-surface receptor for the cytokine FLT3LG and regulates differentiation, proliferation and survival of hematopoietic progenitor cells and of dendritic cells. Promotes phosphorylation of SHC1 and AKT1, and activation of the downstream effector MTOR. Promotes activation of RAS signaling and phosphorylation of downstream kinases, including MAPK1/ERK2 and/or MAPK3/ERK1. Promotes phosphorylation of FES, FER, PTPN6/SHP, PTPN11/SHP-2, PLCG1, and STAT5A and/or STAT5B. Activation of wild-type FLT3 causes only marginal activation of STAT5A or STAT5B. Mutations that cause constitutive kinase activity promote cell proliferation and resistance to apoptosis via the activation of multiple signaling pathways. The sequence is that of Receptor-type tyrosine-protein kinase FLT3 (Flt3) from Mus musculus (Mouse).